The sequence spans 134 residues: Profilin-3 (134 aa).

Cysteines 13 and 118 form a disulfide. Positions 84-100 (AVIRGKKGSGGITIKKT) match the Involved in PIP2 interaction motif. A Phosphothreonine modification is found at T114.

The protein belongs to the profilin family. In terms of assembly, occurs in many kinds of cells as a complex with monomeric actin in a 1:1 ratio. Post-translationally, phosphorylated by MAP kinases.

It is found in the cytoplasm. It localises to the cytoskeleton. Its function is as follows. Binds to actin and affects the structure of the cytoskeleton. At high concentrations, profilin prevents the polymerization of actin, whereas it enhances it at low concentrations. By binding to PIP2, it inhibits the formation of IP3 and DG. The sequence is that of Profilin-3 (PRO3) from Olea europaea (Common olive).